We begin with the raw amino-acid sequence, 279 residues long: Secreted RxLR effector protein 152 (279 aa).

The N-terminal stretch at 1–22 (MRNGSVLFGLFFIGHSCSVLLA) is a signal peptide. Positions 47–62 (RTLQADDSERTLAEER) match the RxLR-dEER motif.

Belongs to the RxLR effector family.

The protein localises to the secreted. The protein resides in the host nucleus. In terms of biological role, secreted effector that completely suppresses the host cell death induced by cell death-inducing proteins. This is Secreted RxLR effector protein 152 from Plasmopara viticola (Downy mildew of grapevine).